Consider the following 132-residue polypeptide: Insulin-like 3 (132 aa).

A signal peptide spans 1 to 24; that stretch reads MSPRPLAWALVLLGAALAVALALG. 3 cysteine pairs are disulfide-bonded: cysteine 36-cysteine 117, cysteine 48-cysteine 130, and cysteine 116-cysteine 121. Positions 61–104 are cleaved as a propeptide — c peptide like; sequence VAGGDRELLQWLEGRHLHGQVSDGDPMLVLVPQALPQASLHHHH.

It belongs to the insulin family. As to quaternary structure, heterodimer of a B chain and an A chain linked by two disulfide bonds. As to expression, more strongly expressed in testis than in ovary.

It is found in the secreted. Seems to play a role in testicular function. May be a trophic hormone with a role in testicular descent in fetal life. Is a ligand for LGR8 receptor. This Canis lupus familiaris (Dog) protein is Insulin-like 3 (INSL3).